The primary structure comprises 335 residues: Protease HtpX homolog (335 aa).

The next 3 membrane-spanning stretches (helical) occupy residues 9-29, 42-62, and 64-84; these read VYMM…STIA, LFTS…AIIY, and ILAY…LLII. Residue His-168 coordinates Zn(2+). Glu-169 is an active-site residue. A Zn(2+)-binding site is contributed by His-172. The next 2 helical transmembrane spans lie at 179 to 199 and 213 to 233; these read AVML…YALL and AAIG…VLAF. Glu-238 provides a ligand contact to Zn(2+).

Belongs to the peptidase M48B family. Zn(2+) serves as cofactor.

It localises to the cell membrane. The polypeptide is Protease HtpX homolog (Archaeoglobus fulgidus (strain ATCC 49558 / DSM 4304 / JCM 9628 / NBRC 100126 / VC-16)).